The chain runs to 251 residues: Phosphate import ATP-binding protein PstB 2 (251 aa).

An ABC transporter domain is found at 6–246; sequence FNIENLDLFY…PRDDRTRGYV (241 aa). Residue 38 to 45 coordinates ATP; that stretch reads GPSGCGKS.

Belongs to the ABC transporter superfamily. Phosphate importer (TC 3.A.1.7) family. In terms of assembly, the complex is composed of two ATP-binding proteins (PstB), two transmembrane proteins (PstC and PstA) and a solute-binding protein (PstS).

The protein localises to the cell inner membrane. It catalyses the reaction phosphate(out) + ATP + H2O = ADP + 2 phosphate(in) + H(+). Its function is as follows. Part of the ABC transporter complex PstSACB involved in phosphate import. Responsible for energy coupling to the transport system. This Vibrio cholerae serotype O1 (strain ATCC 39315 / El Tor Inaba N16961) protein is Phosphate import ATP-binding protein PstB 2.